The chain runs to 154 residues: Transcription antitermination protein NusB (154 aa).

Belongs to the NusB family.

In terms of biological role, involved in transcription antitermination. Required for transcription of ribosomal RNA (rRNA) genes. Binds specifically to the boxA antiterminator sequence of the ribosomal RNA (rrn) operons. This chain is Transcription antitermination protein NusB, found in Enterococcus faecalis (strain ATCC 700802 / V583).